The following is a 301-amino-acid chain: Thyroxine 5-deiodinase (301 aa).

Topologically, residues 1 to 41 are cytoplasmic; sequence MSRQAAPRWVVGEGRGTLGGAATMLRSLLLHSLRLCSQTAS. The helical; Signal-anchor for type II membrane protein transmembrane segment at 42–64 threads the bilayer; it reads CLVLFPRFLGTAFMLWLLDFLCI. At 65–301 the chain is on the extracellular side; it reads RKHLLGRRRR…QLHGPQPRRV (237 aa). Sec-167 is an active-site residue. A non-standard amino acid (selenocysteine) is located at residue Sec-167.

The protein belongs to the iodothyronine deiodinase family. In terms of assembly, monomer. Homodimer. May undergo minor heretodimerization with DIO1 and DIO2. As to expression, highly expressed in mammary gland. Detected at lower levels in kidney, and at very low levels in the other tissues.

It localises to the cell membrane. Its subcellular location is the endosome membrane. It catalyses the reaction 3,3',5'-triiodo-L-thyronine + iodide + A + H(+) = L-thyroxine + AH2. The catalysed reaction is 3,3'-diiodo-L-thyronine + iodide + A + H(+) = 3,3',5-triiodo-L-thyronine + AH2. It carries out the reaction 3-iodo-L-thyronine + iodide + A + H(+) = 3,5-diiodo-L-thyronine + AH2. The enzyme catalyses L-thyronine + iodide + A + H(+) = 3-iodo-L-thyronine + AH2. It catalyses the reaction 3',5'-diiodo-L-thyronine + iodide + A + H(+) = 3,3',5'-triiodo-L-thyronine + AH2. The catalysed reaction is 3'-iodo-L-thyronine + iodide + A + H(+) = 3,3'-diiodo-L-thyronine + AH2. It carries out the reaction 3,3',5'-triiodothyronamine + iodide + A + H(+) = 3,3',5,5'-tetraiodothyronamine + AH2. The enzyme catalyses 3',5'-diiodothyronamine + iodide + A + H(+) = 3,3',5'-triiodothyronamine + AH2. It catalyses the reaction 3,3'-diiodothyronamine + iodide + A + H(+) = 3,3',5-triiodothyronamine + AH2. The catalysed reaction is 3-iodothyronamine + iodide + A + H(+) = 3,5-diiodothyronamine + AH2. It carries out the reaction 3'-iodothyronamine + iodide + A + H(+) = 3,3'-diiodothyronamine + AH2. The enzyme catalyses thyronamine + iodide + A + H(+) = 3-iodothyronamine + AH2. Plays a crucial role in the metabolism of thyroid hormones (TH) and has specific roles in TH activation and inactivation by deiodination. Catalyzes the deiodination of L-thyroxine (T4) to 3,3',5'-triiodothyronine (rT3), 3,5,3'-triiodothyronine (T3) to 3,3'-diiodothyronine (3,3'-T2), 3,5-diiodothyronine (3,5-T2) to 3-monoiodothyronine (3-T1), rT3 to 3',5'-diiodothyronine (3',5'-T2) and 3,3'-T2 to 3'-monoiodothyronine (3'-T1) via inner-ring deiodination (IRD). Catalyzes the deiodination of 3-T1 to L-thyronine (T0) via outer-ring deiodination (ORD). Catalyzes the tyrosyl ring deiodinations of 3,3',5,5'-tetraiodothyronamine, 3,3',5'-triiodothyronamine, 3,5,3'-triiodothyronamine, 3,5-diiodothyronamine, 3,3'-diiodothyronamine and 3-iodothyronamine. The polypeptide is Thyroxine 5-deiodinase (DIO3) (Bos taurus (Bovine)).